The primary structure comprises 137 residues: Large ribosomal subunit protein uL16 (137 aa).

Belongs to the universal ribosomal protein uL16 family. Part of the 50S ribosomal subunit.

Its function is as follows. Binds 23S rRNA and is also seen to make contacts with the A and possibly P site tRNAs. This chain is Large ribosomal subunit protein uL16, found in Roseobacter denitrificans (strain ATCC 33942 / OCh 114) (Erythrobacter sp. (strain OCh 114)).